Consider the following 747-residue polypeptide: AMP deaminase 1 (747 aa).

Phosphothreonine is present on Thr81. Phosphoserine is present on Ser85. Tyr216 carries the phosphotyrosine modification. Positions 303 and 305 each coordinate Zn(2+). Substrate-binding positions include His305 and 374-379 (KFNDKY). Residue Ser441 is modified to Phosphoserine. Position 572 (His572) interacts with Zn(2+). Glu575 is a substrate binding site. The Proton acceptor role is filled by His594. Asp649 is a binding site for Zn(2+). 650–653 (DPMQ) contacts substrate.

Belongs to the metallo-dependent hydrolases superfamily. Adenosine and AMP deaminases family. As to quaternary structure, homotetramer. Requires Zn(2+) as cofactor.

The catalysed reaction is AMP + H2O + H(+) = IMP + NH4(+). It participates in purine metabolism; IMP biosynthesis via salvage pathway; IMP from AMP: step 1/1. AMP deaminase plays a critical role in energy metabolism. The sequence is that of AMP deaminase 1 from Rattus norvegicus (Rat).